We begin with the raw amino-acid sequence, 103 residues long: Cystatin-A8 (103 aa).

The disordered stretch occupies residues M1–E20. The Secondary area of contact signature appears at Q51–G55.

The protein belongs to the cystatin family.

The protein localises to the cytoplasm. This is an intracellular thiol proteinase inhibitor. The sequence is that of Cystatin-A8 from Sus scrofa (Pig).